The chain runs to 261 residues: Arcelin-5A (261 aa).

The first 21 residues, 1 to 21, serve as a signal peptide directing secretion; that stretch reads MASSKLLSLALFLVLLTHANS. N-linked (GlcNAc...) asparagine glycans are attached at residues Asn-43, Asn-91, and Asn-100. An intrachain disulfide couples Cys-167 to Cys-203. Positions 255–261 are excised as a propeptide; sequence ILLNNIL.

The protein belongs to the leguminous lectin family. As to quaternary structure, monomer. The C-terminal segment appears to be highly susceptible to proteolysis.

Its function is as follows. Seed storage. This carbohydrate-binding lectin has toxic effects on bean bruchid pests. This chain is Arcelin-5A (ARC5A), found in Phaseolus vulgaris (Kidney bean).